The sequence spans 283 residues: Elongation factor Ts (283 aa).

The interval 79–82 (TDFV) is involved in Mg(2+) ion dislocation from EF-Tu.

It belongs to the EF-Ts family.

It localises to the cytoplasm. Its function is as follows. Associates with the EF-Tu.GDP complex and induces the exchange of GDP to GTP. It remains bound to the aminoacyl-tRNA.EF-Tu.GTP complex up to the GTP hydrolysis stage on the ribosome. The chain is Elongation factor Ts from Shewanella putrefaciens (strain CN-32 / ATCC BAA-453).